Here is a 306-residue protein sequence, read N- to C-terminus: Ribosomal protein L11 methyltransferase (306 aa).

S-adenosyl-L-methionine contacts are provided by Thr154, Gly179, Asp201, and Asn242.

Belongs to the methyltransferase superfamily. PrmA family.

Its subcellular location is the cytoplasm. The catalysed reaction is L-lysyl-[protein] + 3 S-adenosyl-L-methionine = N(6),N(6),N(6)-trimethyl-L-lysyl-[protein] + 3 S-adenosyl-L-homocysteine + 3 H(+). Its function is as follows. Methylates ribosomal protein L11. The chain is Ribosomal protein L11 methyltransferase from Xanthomonas euvesicatoria pv. vesicatoria (strain 85-10) (Xanthomonas campestris pv. vesicatoria).